A 330-amino-acid polypeptide reads, in one-letter code: (11Z)-hexadec-11-enoyl-CoA conjugase (330 aa).

2 consecutive transmembrane segments (helical) span residues 37 to 57 and 65 to 85; these read IVVM…YGLY and LATS…ITAG. The Histidine box-1 signature appears at 87–92; the sequence is HRLWSH. Residues 101 to 121 form a helical membrane-spanning segment; it reads LEILLMVFNSIAFQNTIFTWV. Residues 124–128 carry the Histidine box-2 motif; sequence HRLHH. 2 helical membrane-spanning segments follow: residues 185-205 and 216-238; these read AIPF…MYFW and TVLR…HLWG. Residues 264-268 carry the Histidine box-3 motif; sequence HNYHH.

The protein belongs to the fatty acid desaturase type 1 family. Fe(2+) is required as a cofactor. In terms of tissue distribution, highly expressed in the pheromone gland.

The protein localises to the membrane. It catalyses the reaction an 11,12-saturated fatty acyl-CoA + 2 Fe(II)-[cytochrome b5] + O2 + 2 H(+) = an (11Z)-Delta(11)-fatty acyl-CoA + 2 Fe(III)-[cytochrome b5] + 2 H2O. It carries out the reaction (11Z)-hexadecenoyl-CoA + AH2 + O2 = (10E,12Z)-hexadecadienoyl-CoA + A + 2 H2O. Functionally, fatty acid desaturase that catalyzes 2 consecutive steps in the biosynthesis of bombykol, a sex pheromone produced by the moth. First acts as an acyl-CoA Delta(11) desaturase (1) by catalyzing the formation of Delta(11) fatty acyl precursors. Then acts as a (11Z)-hexadec-11-enoyl-CoA conjugase (2) by converting a single cis double bond at position 11 of (11Z)-hexadec-11-enoyl-CoA into conjugated 10 trans and 12 cis double bonds. The protein is (11Z)-hexadec-11-enoyl-CoA conjugase of Bombyx mori (Silk moth).